The sequence spans 520 residues: TnpB-like protein L79 (520 aa).

Positions 21–47 (GSKTKKKVFVKKKPPDKKPLKKPVKKT) are enriched in basic residues. The tract at residues 21-52 (GSKTKKKVFVKKKPPDKKPLKKPVKKTVKTDK) is disordered. Residues C474, C477, C491, and C494 each coordinate Zn(2+).

This sequence in the central section; belongs to the transposase 2 family. In the C-terminal section; belongs to the transposase 35 family.

The chain is TnpB-like protein L79 from Acanthamoeba polyphaga mimivirus (APMV).